Consider the following 311-residue polypeptide: Formimidoylglutamase (311 aa).

Positions 130, 155, 157, 159, 242, and 244 each coordinate Mn(2+).

The protein belongs to the arginase family. Mn(2+) is required as a cofactor.

It carries out the reaction N-formimidoyl-L-glutamate + H2O = formamide + L-glutamate. Its pathway is amino-acid degradation; L-histidine degradation into L-glutamate; L-glutamate from N-formimidoyl-L-glutamate (hydrolase route): step 1/1. Catalyzes the conversion of N-formimidoyl-L-glutamate to L-glutamate and formamide. The sequence is that of Formimidoylglutamase from Staphylococcus aureus (strain MSSA476).